The chain runs to 93 residues: MIYTIRISKKYFYKLVNMCKEYKSYRECVMKELEKKYQVKIYNSTRSHDMNIKNDLIPKVINIIFYDQENERLEELAQRLGKTKYEIIISLFK.

This is an uncharacterized protein from Sulfolobus islandicus filamentous virus (isolate Iceland/Hveragerdi) (SIFV).